The primary structure comprises 432 residues: Carbohydrate esterase MZ0003 (432 aa).

The N-terminal stretch at 1–25 (MQRTCVLIVLIVTSTMWTPDPDVYA) is a signal peptide. The short motif at 266-271 (GHSRLG) is the GXSYXG catalytic site motif element. Ser-268 functions as the Nucleophile in the catalytic mechanism. Residues Lys-272 and Trp-359 each coordinate substrate. The active-site Charge relay system is His-409.

Belongs to the carbohydrate esterase 15 (CE15) family. Requires Does not require metal ions for activity. as cofactor.

It is found in the periplasm. Is inhibited by PMSF and by NaF in vitro, which is consistent with the catalytic nucleophile being a serine. Displays some glucuronoyl esterase activity in vitro, since it is able to hydrolyze methyl 4-O-methyl-D-glucopyranosyluronate, allyl D-glucuronate, benzyl D-glucuronate and D-glucuronic acid methyl ester. However, esters of glucuronic acid are probably not its biological substrate, as they are not present in the marine environment. Can also hydrolyze a range of other esters, including p-nitrophenyl acetate. More likely biologically-relevant substrates for MZ0003 and other marine bacterial CE15s are algal cell wall polysaccharides, as these would be readily available in this environment and could be used as energy sources. The protein is Carbohydrate esterase MZ0003 of Unknown prokaryotic organism.